The chain runs to 371 residues: Carbamoyl phosphate synthase small chain (371 aa).

Residues 1 to 190 (MRKTAILALE…LYRENEKPLV (190 aa)) are CPSase. Residues Ser47, Gly237, and Gly239 each coordinate L-glutamine. The Glutamine amidotransferase type-1 domain maps to 189 to 371 (LVAVIDFGVK…FKEFVKMAQG (183 aa)). The active-site Nucleophile is the Cys264. Residues Leu265, Gln268, Asn306, and Phe309 each coordinate L-glutamine. Catalysis depends on residues His348 and Glu350.

It belongs to the CarA family. Composed of two chains; the small (or glutamine) chain promotes the hydrolysis of glutamine to ammonia, which is used by the large (or ammonia) chain to synthesize carbamoyl phosphate. Tetramer of heterodimers (alpha,beta)4.

The enzyme catalyses hydrogencarbonate + L-glutamine + 2 ATP + H2O = carbamoyl phosphate + L-glutamate + 2 ADP + phosphate + 2 H(+). It carries out the reaction L-glutamine + H2O = L-glutamate + NH4(+). It participates in amino-acid biosynthesis; L-arginine biosynthesis; carbamoyl phosphate from bicarbonate: step 1/1. It functions in the pathway pyrimidine metabolism; UMP biosynthesis via de novo pathway; (S)-dihydroorotate from bicarbonate: step 1/3. Its function is as follows. Small subunit of the glutamine-dependent carbamoyl phosphate synthetase (CPSase). CPSase catalyzes the formation of carbamoyl phosphate from the ammonia moiety of glutamine, carbonate, and phosphate donated by ATP, constituting the first step of 2 biosynthetic pathways, one leading to arginine and/or urea and the other to pyrimidine nucleotides. The small subunit (glutamine amidotransferase) binds and cleaves glutamine to supply the large subunit with the substrate ammonia. The protein is Carbamoyl phosphate synthase small chain of Aquifex aeolicus (strain VF5).